Here is a 454-residue protein sequence, read N- to C-terminus: UDP-N-acetylmuramoylalanine--D-glutamate ligase (454 aa).

Position 115-121 (Gly-115–Thr-121) interacts with ATP.

This sequence belongs to the MurCDEF family.

Its subcellular location is the cytoplasm. It catalyses the reaction UDP-N-acetyl-alpha-D-muramoyl-L-alanine + D-glutamate + ATP = UDP-N-acetyl-alpha-D-muramoyl-L-alanyl-D-glutamate + ADP + phosphate + H(+). The protein operates within cell wall biogenesis; peptidoglycan biosynthesis. Its function is as follows. Cell wall formation. Catalyzes the addition of glutamate to the nucleotide precursor UDP-N-acetylmuramoyl-L-alanine (UMA). This Thermoanaerobacter pseudethanolicus (strain ATCC 33223 / 39E) (Clostridium thermohydrosulfuricum) protein is UDP-N-acetylmuramoylalanine--D-glutamate ligase.